The following is a 150-amino-acid chain: Endoribonuclease YbeY (150 aa).

Zn(2+) contacts are provided by H112, H116, and H122.

Belongs to the endoribonuclease YbeY family. Requires Zn(2+) as cofactor.

Its subcellular location is the cytoplasm. Single strand-specific metallo-endoribonuclease involved in late-stage 70S ribosome quality control and in maturation of the 3' terminus of the 16S rRNA. This is Endoribonuclease YbeY from Geobacter sulfurreducens (strain ATCC 51573 / DSM 12127 / PCA).